The following is a 151-amino-acid chain: Ubiquitin-like protein 4A-B (151 aa).

Residues 1–76 (MILTIKPLKG…LNLVVRPAGE (76 aa)) form the Ubiquitin-like domain.

Component of the BAT3 complex.

Its subcellular location is the cytoplasm. The protein localises to the cytosol. Functionally, component of the BAT3 complex, a multiprotein complex involved in the post-translational delivery of tail-anchored (TA) membrane proteins to the endoplasmic reticulum membrane. TA membrane proteins, also named type II transmembrane proteins, contain a single C-terminal transmembrane region. In Oncorhynchus mykiss (Rainbow trout), this protein is Ubiquitin-like protein 4A-B (ubl4ab).